We begin with the raw amino-acid sequence, 510 residues long: Gallate 1-beta-glucosyltransferase (510 aa).

The active-site Proton acceptor is the histidine 19. Histidine 19 contacts an anthocyanidin. Residues glutamine 343, histidine 358, tryptophan 361, asparagine 362, serine 363, and glutamate 366 each contribute to the UDP-alpha-D-glucose site. Residue glycine 381 coordinates an anthocyanidin. UDP-alpha-D-glucose is bound by residues aspartate 382 and glutamine 383.

The protein belongs to the UDP-glycosyltransferase family. In terms of tissue distribution, expressed in swelling buds and young leaves.

The enzyme catalyses 3,4,5-trihydroxybenzoate + UDP-alpha-D-glucose = 1-O-galloyl-beta-D-glucose + UDP. It catalyses the reaction vanillate + UDP-alpha-D-glucose = 1-O-(4-hydroxy-3-methoxybenzoyl)-beta-D-glucose + UDP. It carries out the reaction 3,4-dihydroxybenzoate + UDP-alpha-D-glucose = 1-O-(3,4-dihydroxy-benzoyl)-beta-D-glucose + UDP. In terms of biological role, glucosyltransferase that catalyzes the formation of 1-O-beta-D-glucose esters with hydroxybenzoic acids as preferred glucosyl acceptors. Has the highest activity with 3,4-dihydroxybenzoate, vanillate and gallate in vitro. Gallate is the predicted native substrate of the enzyme, which thus catalyzes the formation of 1-O-galloyl-beta-D-glucose, the first committed step of gallotannin biosynthesis. The polypeptide is Gallate 1-beta-glucosyltransferase (Quercus robur (English oak)).